The sequence spans 152 residues: Ubiquitin-conjugating enzyme E2 A (152 aa).

The region spanning 4–150 (PARRRLMRDF…VSAIVEQSWR (147 aa)) is the UBC core domain. The active-site Glycyl thioester intermediate is cysteine 88. Serine 120 carries the phosphoserine; by CDK9 modification.

This sequence belongs to the ubiquitin-conjugating enzyme family. As to quaternary structure, interacts with RAD18 and WAC. Interacts with RFPL4A and CCNB1. Phosphorylation at Ser-120 by CDK9 increases activity towards histone H2B.

The protein resides in the late endosome. It localises to the lysosome. The enzyme catalyses S-ubiquitinyl-[E1 ubiquitin-activating enzyme]-L-cysteine + [E2 ubiquitin-conjugating enzyme]-L-cysteine = [E1 ubiquitin-activating enzyme]-L-cysteine + S-ubiquitinyl-[E2 ubiquitin-conjugating enzyme]-L-cysteine.. Its pathway is protein modification; protein ubiquitination. E2 ubiquitin-conjugating enzyme that accepts ubiquitin from the ubiquitin-activating enzyme E1 and transfers it to a E3 ubiquitin-protein ligase. In vitro catalyzes 'Lys-11', as well as 'Lys-48'-linked polyubiquitination. Together with the E3 enzyme BRE1 (RNF20 and/or RNF40), plays a role in transcription regulation by catalyzing the monoubiquitination of histone H2B at 'Lys-120' to form H2BK120ub1. H2BK120ub1 gives a specific tag for epigenetic transcriptional activation, elongation by RNA polymerase II, telomeric silencing, and is also a prerequisite for H3K4me and H3K79me formation. Involved in mitophagy by acting as a E2 ubiquitin-conjugating enzyme for PRKN. In association with the E3 enzyme UBR4, is involved in N-end rule-dependent protein degradation. In association with the E3 ubiquitin-protein ligase complex SIFI, inhibits the mitochondrial stress response by acting as a E2 ubiquitin-conjugating enzyme for UBR4 and KCMF1. In Homo sapiens (Human), this protein is Ubiquitin-conjugating enzyme E2 A.